Consider the following 489-residue polypeptide: Bypass of stop codon protein 5 (489 aa).

The tract at residues 1-42 (MQESKEPQNKFEGCQRISSSSSTLFGGTSFEEPRCGTSQGKE) is disordered. The segment covering 18-30 (SSSSSTLFGGTSF) has biased composition (low complexity). A phosphoserine mark is found at S111 and S350.

Belongs to the BUL1 family.

Appears to play a role in translation fidelity, and may act when translation is compromised. May be a component of the ubiquitination pathway. This Saccharomyces cerevisiae (strain ATCC 204508 / S288c) (Baker's yeast) protein is Bypass of stop codon protein 5 (BSC5).